The sequence spans 62 residues: Large ribosomal subunit protein eL24 (62 aa).

Cys-7, Cys-10, Cys-33, and Cys-37 together coordinate Zn(2+). A C4-type zinc finger spans residues 7-37 (CSFCGREIEPGTGIMYVKNDGSILWFCSRKC).

Belongs to the eukaryotic ribosomal protein eL24 family. As to quaternary structure, part of the 50S ribosomal subunit. Forms a cluster with proteins L3 and L14. Zn(2+) is required as a cofactor.

Its function is as follows. Binds to the 23S rRNA. The polypeptide is Large ribosomal subunit protein eL24 (Staphylothermus marinus (strain ATCC 43588 / DSM 3639 / JCM 9404 / F1)).